The primary structure comprises 160 residues: 17.9 kDa class II heat shock protein (160 aa).

The sHSP domain occupies 44–160 (DARAMAATPA…KPKTIQVQVA (117 aa)).

This sequence belongs to the small heat shock protein (HSP20) family.

The protein resides in the cytoplasm. This Helianthus annuus (Common sunflower) protein is 17.9 kDa class II heat shock protein (HSP17.9).